A 285-amino-acid chain; its full sequence is Glutamate racemase (285 aa).

Substrate is bound by residues 28-29 and 60-61; these read DS and YG. The active-site Proton donor/acceptor is the Cys-92. Residue 93–94 participates in substrate binding; that stretch reads NT. Cys-204 serves as the catalytic Proton donor/acceptor. A substrate-binding site is contributed by 205–206; sequence TH.

This sequence belongs to the aspartate/glutamate racemases family.

It catalyses the reaction L-glutamate = D-glutamate. The protein operates within cell wall biogenesis; peptidoglycan biosynthesis. In terms of biological role, provides the (R)-glutamate required for cell wall biosynthesis. This Escherichia coli O9:H4 (strain HS) protein is Glutamate racemase.